The primary structure comprises 367 residues: C-X-C chemokine receptor type 3 (367 aa).

At 1 to 56 the chain is on the extracellular side; sequence MYLEVSERQVLDASDIAFLLENSTSPYDYGENESDFSDSPPCPQDFSLNFDRTFLP. N-linked (GlcNAc...) asparagine glycosylation is present at Asn-22. Sulfotyrosine is present on residues Tyr-27 and Tyr-29. N-linked (GlcNAc...) asparagine glycosylation is present at Asn-32. A helical membrane pass occupies residues 57–77; sequence VLYSLLFLLGLLGNGAVAAVL. Over 78–89 the chain is Cytoplasmic; sequence LSQRTALSSTDT. Residues 90–110 traverse the membrane as a helical segment; sequence FLLHLAVADVLLVLTLPLWAV. At 111-125 the chain is on the extracellular side; sequence DAAAQWVFGSGLCKV. Cys-123 and Cys-202 are oxidised to a cystine. Residues 126-146 form a helical membrane-spanning segment; the sequence is AGALFNINFYAGAFLLACISF. Residues 147–168 lie on the Cytoplasmic side of the membrane; the sequence is DRYLSIVHATQIYRRDPWVRVA. The helical transmembrane segment at 169 to 189 threads the bilayer; that stretch reads LTCIVVWGLCVLFALPDFIFL. Residues 190–222 are Extracellular-facing; it reads SASHDQRLNATHCQYNFPQVGRTALRVLQLVAG. Residue Asn-198 is glycosylated (N-linked (GlcNAc...) asparagine). Residues 223–243 form a helical membrane-spanning segment; it reads FLMPLLVMAYCYAHILAVLLV. The Cytoplasmic portion of the chain corresponds to 244–255; that stretch reads SRGQRRFRAMRL. The chain crosses the membrane as a helical span at residues 256 to 276; it reads VVVVVVAFAVCWTPYHLVVLV. Topologically, residues 277 to 300 are extracellular; it reads DILMDVGVLARNCGRESHVDVAKS. Residues 301–321 traverse the membrane as a helical segment; it reads VTSGMGYMHCCLNPLLYAFVG. At 322 to 367 the chain is on the cytoplasmic side; it reads VKFKEQMWMLLMRLGRSDQRGPQRQPSSSRRESSWSETTEASYLGL. The tract at residues 339-367 is disordered; that stretch reads DQRGPQRQPSSSRRESSWSETTEASYLGL.

This sequence belongs to the G-protein coupled receptor 1 family. In terms of assembly, homomer. Forms heteromers with ACKR4. Interacts with PF4/CXCL4. In terms of processing, sulfation on Tyr-27 and Tyr-29 is essential for CXCL10 binding. Post-translationally, N-glycosylated.

Its subcellular location is the cell membrane. Functionally, receptor for the C-X-C chemokine CXCL9, CXCL10 and CXCL11 and mediates the proliferation, survival and angiogenic activity of mesangial cells through a heterotrimeric G-protein signaling pathway. Probably promotes cell chemotaxis response. Binds to CCL21. Upon activation by PF4, induces activated T-lymphocytes migration mediated via downstream Ras/extracellular signal-regulated kinase (ERK) signaling. The chain is C-X-C chemokine receptor type 3 (Cxcr3) from Rattus norvegicus (Rat).